The primary structure comprises 296 residues: 4-hydroxy-tetrahydrodipicolinate synthase (296 aa).

Pyruvate is bound at residue threonine 49. Residue tyrosine 137 is the Proton donor/acceptor of the active site. Lysine 166 functions as the Schiff-base intermediate with substrate in the catalytic mechanism. Residue isoleucine 208 participates in pyruvate binding.

Belongs to the DapA family. As to quaternary structure, homotetramer; dimer of dimers.

The protein localises to the cytoplasm. It carries out the reaction L-aspartate 4-semialdehyde + pyruvate = (2S,4S)-4-hydroxy-2,3,4,5-tetrahydrodipicolinate + H2O + H(+). It functions in the pathway amino-acid biosynthesis; L-lysine biosynthesis via DAP pathway; (S)-tetrahydrodipicolinate from L-aspartate: step 3/4. Functionally, catalyzes the condensation of (S)-aspartate-beta-semialdehyde [(S)-ASA] and pyruvate to 4-hydroxy-tetrahydrodipicolinate (HTPA). The protein is 4-hydroxy-tetrahydrodipicolinate synthase of Azobacteroides pseudotrichonymphae genomovar. CFP2.